Here is a 257-residue protein sequence, read N- to C-terminus: Small ribosomal subunit protein eS1 (257 aa).

Positions 237–257 (GADGEKVDRPDDYEPPVQQEV) are disordered. Residues 239-248 (DGEKVDRPDD) show a composition bias toward basic and acidic residues.

The protein belongs to the eukaryotic ribosomal protein eS1 family. Component of the small ribosomal subunit. Mature ribosomes consist of a small (40S) and a large (60S) subunit. The 40S subunit contains about 33 different proteins and 1 molecule of RNA (18S). The 60S subunit contains about 49 different proteins and 3 molecules of RNA (28S, 5.8S and 5S).

It is found in the cytoplasm. The chain is Small ribosomal subunit protein eS1 from Caenorhabditis elegans.